The following is a 391-amino-acid chain: MYKAFLIKYAEIGLKGKNRHIFENALKDQIRFNLNKLGNFEVSREQGRVFVECPDDFDYDETVAALQRVFGITGISPVIVINSTDWEDIKQEVGDYVEKFYGRKPFTFKVEAKRGNKQYPIQSPEICSKMGAYLLDRFPELSVDVHTPQEYITVEVRNKAYVYSNTLKGPGGMPVGTGGKAMLLLSGGIDSPVAGYMISKRGVTIEATYFHAPPYTSERAKQKVVDLAKIISAYTGPIKLHVVNFTDIQLYIYEKCPHEELTIIMRRYMMKIAESIANRSKCLGLITGESIGQVASQTMQSLAATNAVCTMPVYRPLIGMDKQEIIDISERIGTFETSVLPFEDCCTIFVAKHPVTRPILSVIEKNELNLSEKIDELVKTALETREVITVK.

Positions 60 to 167 constitute a THUMP domain; sequence DETVAALQRV…NKAYVYSNTL (108 aa). ATP is bound by residues 184–185, 209–210, arginine 266, glycine 288, and glutamine 297; these read LL and YF.

It belongs to the ThiI family.

Its subcellular location is the cytoplasm. The catalysed reaction is [ThiI sulfur-carrier protein]-S-sulfanyl-L-cysteine + a uridine in tRNA + 2 reduced [2Fe-2S]-[ferredoxin] + ATP + H(+) = [ThiI sulfur-carrier protein]-L-cysteine + a 4-thiouridine in tRNA + 2 oxidized [2Fe-2S]-[ferredoxin] + AMP + diphosphate. The enzyme catalyses [ThiS sulfur-carrier protein]-C-terminal Gly-Gly-AMP + S-sulfanyl-L-cysteinyl-[cysteine desulfurase] + AH2 = [ThiS sulfur-carrier protein]-C-terminal-Gly-aminoethanethioate + L-cysteinyl-[cysteine desulfurase] + A + AMP + 2 H(+). The protein operates within cofactor biosynthesis; thiamine diphosphate biosynthesis. In terms of biological role, catalyzes the ATP-dependent transfer of a sulfur to tRNA to produce 4-thiouridine in position 8 of tRNAs, which functions as a near-UV photosensor. Also catalyzes the transfer of sulfur to the sulfur carrier protein ThiS, forming ThiS-thiocarboxylate. This is a step in the synthesis of thiazole, in the thiamine biosynthesis pathway. The sulfur is donated as persulfide by IscS. In Lachnoclostridium phytofermentans (strain ATCC 700394 / DSM 18823 / ISDg) (Clostridium phytofermentans), this protein is Probable tRNA sulfurtransferase.